A 306-amino-acid polypeptide reads, in one-letter code: Porphobilinogen deaminase (306 aa).

Position 239 is an S-(dipyrrolylmethanemethyl)cysteine (cysteine 239).

The protein belongs to the HMBS family. Monomer. It depends on dipyrromethane as a cofactor.

It catalyses the reaction 4 porphobilinogen + H2O = hydroxymethylbilane + 4 NH4(+). It participates in porphyrin-containing compound metabolism; protoporphyrin-IX biosynthesis; coproporphyrinogen-III from 5-aminolevulinate: step 2/4. In terms of biological role, tetrapolymerization of the monopyrrole PBG into the hydroxymethylbilane pre-uroporphyrinogen in several discrete steps. The polypeptide is Porphobilinogen deaminase (hemC) (Helicobacter pylori (strain J99 / ATCC 700824) (Campylobacter pylori J99)).